The primary structure comprises 160 residues: Cyclic pyranopterin monophosphate synthase (160 aa).

Residues 75 to 77 (LCH) and 113 to 114 (ME) each bind substrate. D128 is a catalytic residue.

It belongs to the MoaC family. Homohexamer; trimer of dimers.

It catalyses the reaction (8S)-3',8-cyclo-7,8-dihydroguanosine 5'-triphosphate = cyclic pyranopterin phosphate + diphosphate. The protein operates within cofactor biosynthesis; molybdopterin biosynthesis. Its function is as follows. Catalyzes the conversion of (8S)-3',8-cyclo-7,8-dihydroguanosine 5'-triphosphate to cyclic pyranopterin monophosphate (cPMP). This Haemophilus influenzae (strain PittEE) protein is Cyclic pyranopterin monophosphate synthase.